Reading from the N-terminus, the 94-residue chain is Integration host factor subunit beta (94 aa).

It belongs to the bacterial histone-like protein family. As to quaternary structure, heterodimer of an alpha and a beta chain.

Its function is as follows. This protein is one of the two subunits of integration host factor, a specific DNA-binding protein that functions in genetic recombination as well as in transcriptional and translational control. The polypeptide is Integration host factor subunit beta (Actinobacillus succinogenes (strain ATCC 55618 / DSM 22257 / CCUG 43843 / 130Z)).